Reading from the N-terminus, the 317-residue chain is Acetyl-coenzyme A carboxylase carboxyl transferase subunit alpha (317 aa).

The CoA carboxyltransferase C-terminal domain maps to 40 to 293 (LEVRVREAIV…GDVIANALGE (254 aa)).

The protein belongs to the AccA family. In terms of assembly, acetyl-CoA carboxylase is a heterohexamer composed of biotin carboxyl carrier protein (AccB), biotin carboxylase (AccC) and two subunits each of ACCase subunit alpha (AccA) and ACCase subunit beta (AccD).

It is found in the cytoplasm. It carries out the reaction N(6)-carboxybiotinyl-L-lysyl-[protein] + acetyl-CoA = N(6)-biotinyl-L-lysyl-[protein] + malonyl-CoA. Its pathway is lipid metabolism; malonyl-CoA biosynthesis; malonyl-CoA from acetyl-CoA: step 1/1. Component of the acetyl coenzyme A carboxylase (ACC) complex. First, biotin carboxylase catalyzes the carboxylation of biotin on its carrier protein (BCCP) and then the CO(2) group is transferred by the carboxyltransferase to acetyl-CoA to form malonyl-CoA. This is Acetyl-coenzyme A carboxylase carboxyl transferase subunit alpha from Rhizobium leguminosarum bv. trifolii (strain WSM2304).